A 99-amino-acid chain; its full sequence is Fetal and adult testis-expressed transcript protein homolog (99 aa).

A helical membrane pass occupies residues 79 to 98 (AALFTLLVSVCIANLWLWVH).

In terms of assembly, interacts with BIK and RNF183. Interacts with IMMT/MIC60and EMD.

The protein localises to the mitochondrion. It is found in the mitochondrion outer membrane. The protein resides in the endoplasmic reticulum membrane. Involved in the regulation of endoplasmic reticulum (ER)-mitochondria coupling. Negatively regulates the ER-mitochondria distance and Ca(2+) transfer from ER to mitochondria possibly implicating it in the regulation of apoptosis. May collaborate with RNF183 to restrain BIK protein levels thus regulating apoptotic signaling. The polypeptide is Fetal and adult testis-expressed transcript protein homolog (Fate1) (Mus musculus (Mouse)).